The chain runs to 467 residues: Serine/threonine-protein kinase AFC1 (467 aa).

The 329-residue stretch at 115-443 (YQILSKMGEG…AREALNHPFF (329 aa)) folds into the Protein kinase domain. Residues 121–129 (MGEGTFGQV) and lysine 144 contribute to the ATP site. Aspartate 240 serves as the catalytic Proton acceptor. The segment at 447-467 (REQSIPPFNPNPHPFLYNQKN) is disordered.

The protein belongs to the protein kinase superfamily. CMGC Ser/Thr protein kinase family. Lammer subfamily.

The enzyme catalyses L-seryl-[protein] + ATP = O-phospho-L-seryl-[protein] + ADP + H(+). The catalysed reaction is L-threonyl-[protein] + ATP = O-phospho-L-threonyl-[protein] + ADP + H(+). It carries out the reaction L-tyrosyl-[protein] + ATP = O-phospho-L-tyrosyl-[protein] + ADP + H(+). In terms of biological role, activator of yeast transcription factor, STE12. In Arabidopsis thaliana (Mouse-ear cress), this protein is Serine/threonine-protein kinase AFC1 (AFC1).